A 217-amino-acid polypeptide reads, in one-letter code: MARQATFIVALCVCGLAIAGLPRLASAGDLATEQHEGDIGYGVRAYAGVSNYDGDDDAAGNPVDSDVTDDAITDGEWPRVVSGQKPHTTQKGSLIKKLAVPVVGALTSYLVADRVLPELTSAEEEGTESIPGKKRVKTAVGIAALVAAAAFAGLGLARTFRHFVPKKSKTVASEDSALGNSEEQYVEGTVNGSSDPEQERAGGPLIPEGDEQEVDTE.

Residues 1–19 (MARQATFIVALCVCGLAIA) form the signal peptide. Over residues 171–183 (VASEDSALGNSEE) the composition is skewed to polar residues. Positions 171 to 217 (VASEDSALGNSEEQYVEGTVNGSSDPEQERAGGPLIPEGDEQEVDTE) are disordered. The N-linked (GlcNAc...) asparagine glycan is linked to asparagine 191. The segment covering 208–217 (EGDEQEVDTE) has biased composition (acidic residues).

It belongs to the Gra7 family.

It localises to the secreted. In Neospora caninum (Coccidian parasite), this protein is Dense granule protein 1 (DG1).